A 418-amino-acid chain; its full sequence is MNIIDELAWRDAINQQTNEEGLRELTENTSISLYCGVDPTGDSMHIGHLIPFMMMKRFQLAGHHPYILIGGGTGTIGDPSGRTTERVLQTMEAVQHNVDSLSNQMKKLFGKDAEVTMVNNYDWLSELSLLDFLRDYGKNFNVNTMLAKDIVASRLESGISFTEFTYQILQSIDFYTLHKKHNIQLQIGGADQWGNITAGLDLIRKKEGPEAKVFGLTIPLMLKADGTKFGKTAGGAIWLDPKKTSPFEFYQFWLNQDDRDVIKYLKFFTFLDKEEIDALAEKVEKEPGKREAQRRLAEEVTRFVHDDAALEEAQKISEALFSGNIKDLTIEEIEQGLEHVPTVEITKDAKNIVDWLVDTEIEPSKRQAREDVSGGAISINGDRVTDLDFAVDPTQHFDGKFVVVRKGKKNYFLAKVMD.

Tyr-34 contributes to the L-tyrosine binding site. Residues 39-48 carry the 'HIGH' region motif; that stretch reads PTGDSMHIGH. Tyr-166 and Gln-170 together coordinate L-tyrosine. A 'KMSKS' region motif is present at residues 228-232; the sequence is KFGKT. ATP is bound at residue Lys-231. Positions 350–416 constitute an S4 RNA-binding domain; the sequence is KNIVDWLVDT…GKKNYFLAKV (67 aa).

Belongs to the class-I aminoacyl-tRNA synthetase family. TyrS type 1 subfamily. Homodimer.

The protein localises to the cytoplasm. It catalyses the reaction tRNA(Tyr) + L-tyrosine + ATP = L-tyrosyl-tRNA(Tyr) + AMP + diphosphate + H(+). Catalyzes the attachment of tyrosine to tRNA(Tyr) in a two-step reaction: tyrosine is first activated by ATP to form Tyr-AMP and then transferred to the acceptor end of tRNA(Tyr). In Enterococcus faecalis (strain ATCC 700802 / V583), this protein is Tyrosine--tRNA ligase 1.